The primary structure comprises 115 residues: Tyrosine-protein phosphatase 19 (115 aa).

Residues 1–115 (WLMIVEQKCR…ETGSDAPMVV (115 aa)) enclose the Tyrosine-protein phosphatase domain. Asp83 contacts substrate.

The protein belongs to the protein-tyrosine phosphatase family.

The catalysed reaction is O-phospho-L-tyrosyl-[protein] + H2O = L-tyrosyl-[protein] + phosphate. This is Tyrosine-protein phosphatase 19 (STY-19) from Styela plicata (Wrinkled sea squirt).